The following is a 1171-amino-acid chain: DNA-directed RNA polymerase subunit beta (1171 aa).

The protein belongs to the RNA polymerase beta chain family. The RNAP catalytic core consists of 2 alpha, 1 beta, 1 beta' and 1 omega subunit. When a sigma factor is associated with the core the holoenzyme is formed, which can initiate transcription.

The enzyme catalyses RNA(n) + a ribonucleoside 5'-triphosphate = RNA(n+1) + diphosphate. In terms of biological role, DNA-dependent RNA polymerase catalyzes the transcription of DNA into RNA using the four ribonucleoside triphosphates as substrates. This is DNA-directed RNA polymerase subunit beta from Corynebacterium efficiens (strain DSM 44549 / YS-314 / AJ 12310 / JCM 11189 / NBRC 100395).